A 174-amino-acid polypeptide reads, in one-letter code: Shikimate kinase (174 aa).

14–19 (GAGKST) contributes to the ATP binding site. Position 18 (Ser18) interacts with Mg(2+). 3 residues coordinate substrate: Asp36, Arg60, and Gly82. Arg120 lines the ATP pocket. Arg139 is a binding site for substrate. Gln156 lines the ATP pocket.

Belongs to the shikimate kinase family. In terms of assembly, monomer. It depends on Mg(2+) as a cofactor.

Its subcellular location is the cytoplasm. The enzyme catalyses shikimate + ATP = 3-phosphoshikimate + ADP + H(+). The protein operates within metabolic intermediate biosynthesis; chorismate biosynthesis; chorismate from D-erythrose 4-phosphate and phosphoenolpyruvate: step 5/7. In terms of biological role, catalyzes the specific phosphorylation of the 3-hydroxyl group of shikimic acid using ATP as a cosubstrate. The sequence is that of Shikimate kinase from Vibrio cholerae serotype O1 (strain ATCC 39541 / Classical Ogawa 395 / O395).